Here is a 79-residue protein sequence, read N- to C-terminus: Acyl carrier protein (79 aa).

Residues 4 to 79 (EQILVDVQEA…DVVAYIETKL (76 aa)) enclose the Carrier domain. Position 39 is an O-(pantetheine 4'-phosphoryl)serine (Ser-39).

Belongs to the acyl carrier protein (ACP) family. In terms of processing, 4'-phosphopantetheine is transferred from CoA to a specific serine of apo-ACP by AcpS. This modification is essential for activity because fatty acids are bound in thioester linkage to the sulfhydryl of the prosthetic group.

It is found in the cytoplasm. Its pathway is lipid metabolism; fatty acid biosynthesis. Its function is as follows. Carrier of the growing fatty acid chain in fatty acid biosynthesis. In Exiguobacterium sp. (strain ATCC BAA-1283 / AT1b), this protein is Acyl carrier protein.